The chain runs to 92 residues: Small ribosomal subunit protein uS19 (92 aa).

The protein belongs to the universal ribosomal protein uS19 family.

Its function is as follows. Protein S19 forms a complex with S13 that binds strongly to the 16S ribosomal RNA. In Proteus mirabilis (strain HI4320), this protein is Small ribosomal subunit protein uS19.